The sequence spans 634 residues: Dachshund homolog 2 (634 aa).

The DACHbox-N stretch occupies residues 76–162 (RMVDMHGVKV…LITRKDFETL (87 aa)). 3 disordered regions span residues 171–194 (RKRQ…KRSL), 244–286 (LQGN…SGPQ), and 378–416 (IPES…MDHH). Over residues 244–269 (LQGNGSQNGTESEPDDLNSTTGGSES) the composition is skewed to polar residues. Positions 396–412 (SQTSSHPSSSVSSSPSQ) are enriched in low complexity. Residues 488–568 (SSVETLLTNI…KAKRKLQEAL (81 aa)) are DACHbox-C. Residues 494 to 588 (LTNIQGLLKV…EQALKQATSG (95 aa)) are a coiled coil.

This sequence belongs to the DACH/dachshund family. As to quaternary structure, interacts with SIX6. Interacts with EYA2. In terms of tissue distribution, expressed in embryo, and at lower levels in the newborn.

It localises to the nucleus. In terms of biological role, transcription factor that is involved in regulation of organogenesis. Seems to be a regulator for SIX1 and SIX6. Seems to act as a corepressor of SIX6 in regulating proliferation by directly repressing cyclin-dependent kinase inhibitors, including the p27Kip1 promoter. Is recruited with SIX6 to the p27Kip1 promoter in embryonal retina. SIX6 corepression also seems to involve NCOR1, TBL1, HDAC1 and HDAC3. May be involved together with PAX3, SIX1, and EYA2 in regulation of myogenesis. In the developing somite, expression of DACH2 and PAX3 is regulated by the overlying ectoderm, and DACH2 and PAX3 positively regulate each other's expression. Probably binds to DNA via its DACHbox-N domain. This is Dachshund homolog 2 (Dach2) from Mus musculus (Mouse).